The sequence spans 480 residues: Acetylxylan esterase (480 aa).

The first 19 residues, 1–19 (MNRKLFMTGLLMLAMTMQA), serve as a signal peptide directing secretion.

The protein belongs to the AB hydrolase superfamily.

It carries out the reaction Deacetylation of xylans and xylo-oligosaccharides.. It participates in glycan degradation; xylan degradation. Its function is as follows. Involved in degradation of plant cell wall polysaccharides. Is an acetyl esterase with broad substrate specificity, releasing acetic acid from acetylated xylo-oligosaccharides and acetylated xylan as well as xylose-tetraacetate, 4-O-methylumbelliferyl acetate, glucose-pentaacetate, and cephalosporin C. Appears to have greater activity on oligosaccharides than on polymeric substrates. Is also able to release acetic acid from xylo-oligosaccharides with 4-O-methylglucuronic acid side groups proximally located to O-acetyl esters. Preferentially targets xylo-oligosaccharides possessing three or more O-acetyl groups, but following their depletion it is active on the less acetylated portion of the substrate. The protein is Acetylxylan esterase of Xylanibacter ruminicola (strain ATCC 19189 / DSM 19721 / CIP 105475 / JCM 8958 / 23) (Prevotella ruminicola).